Here is a 477-residue protein sequence, read N- to C-terminus: Delayed-rectifier potassium channel regulatory subunit KCNS2 (477 aa).

Residues 1 to 184 (MTRQSLWDVS…LALDNPGYSV (184 aa)) lie on the Cytoplasmic side of the membrane. The chain crosses the membrane as a helical span at residues 185-206 (LSRVFSVLSILVVLGSIITMCL). Topologically, residues 207 to 225 (NSLPDFQIPDSQGNPGEDP) are extracellular. A helical transmembrane segment spans residues 226 to 248 (RFEIVEHFGIAWFTFELVARFAV). Topologically, residues 249 to 259 (APDFLKFFKNA) are cytoplasmic. A helical membrane pass occupies residues 260 to 280 (LNLIDLMSIVPFYITLVVNLV). Over 281–290 (VESSPTLANL) the chain is Extracellular. The helical; Voltage-sensor transmembrane segment at 291–311 (GRVAQVLRLMRIFRILKLARH) threads the bilayer. Residues 312 to 326 (STGLRSLGATLKYSY) are Cytoplasmic-facing. A helical transmembrane segment spans residues 327 to 348 (KEVGLLLLYLSVGISIFSVVAY). The Extracellular segment spans residues 349–361 (TIEKEENEGLATI). The helical intramembrane region spans 362–373 (PACWWWATVSMT). The Selectivity filter motif lies at 374 to 379 (TVGYGD). The stretch at 374–381 (TVGYGDVV) is an intramembrane region. Residues 382 to 388 (PGTTAGK) lie on the Extracellular side of the membrane. The chain crosses the membrane as a helical span at residues 389-417 (LTASACILAGILVVVLPITLIFNKFSHFY). At 418–477 (RRQKQLESAMRSCDFGDGMKEVPSVNLRDYYAHKVKSLMASLTNMSRSSPSELSLDDSLH) the chain is on the cytoplasmic side.

This sequence belongs to the potassium channel family. S (TC 1.A.1.2) subfamily. Kv9.2/KCNS2 sub-subfamily. As to quaternary structure, heterotetramer with KCNB1 and KCNB2. Does not form homomultimers. As to expression, detected in brain, but not in the other tissues tested. Expression was highest in the olfactory bulb, cerebral cortex, hippocampus, habenula, basolateral amygdaloid nuclei and cerebellum.

The protein resides in the cell membrane. In terms of biological role, potassium channel regulatory subunit that modulate the delayed rectifier voltage-gated potassium channel activity of KCNB1 and KCNB2 by altering their kinetics, expression levels, and shifting the half-inactivation potential to more polarized values. While it does not form functional channels on its own, it can form functional heterotetrameric channels with KCNB1 and KCNB2. Each regulatory subunit has unique regulatory properties that can lead to extensive inhibition, significant changes in kinetics, and/or substantial shifts in the voltage dependencies of the inactivation process. The protein is Delayed-rectifier potassium channel regulatory subunit KCNS2 of Mus musculus (Mouse).